The primary structure comprises 197 residues: Imidazoleglycerol-phosphate dehydratase (197 aa).

It belongs to the imidazoleglycerol-phosphate dehydratase family.

Its subcellular location is the cytoplasm. It catalyses the reaction D-erythro-1-(imidazol-4-yl)glycerol 3-phosphate = 3-(imidazol-4-yl)-2-oxopropyl phosphate + H2O. The protein operates within amino-acid biosynthesis; L-histidine biosynthesis; L-histidine from 5-phospho-alpha-D-ribose 1-diphosphate: step 6/9. This is Imidazoleglycerol-phosphate dehydratase from Syntrophobacter fumaroxidans (strain DSM 10017 / MPOB).